Reading from the N-terminus, the 1029-residue chain is Multiple C2 domain and transmembrane region protein 6 (1029 aa).

Residues 1–111 form the C2 1 domain; that stretch reads MNKLVVEIVD…SGVQRYPLDK (111 aa). The segment at 187–224 is disordered; sequence TKKKEKESRTFHSIGAHAGGGGGAPPMSQAKQAYPPPP. 3 consecutive C2 domains span residues 277–398, 437–562, and 605–727; these read RSSG…PQWY, RVSH…PRWF, and FSSD…THFY. Asp-310, Asp-316, Asp-363, Asp-365, and Asp-371 together coordinate Ca(2+). 2 helical membrane-spanning segments follow: residues 864-884 and 976-996; these read LILV…LFVI and FALI…AIII.

Belongs to the MCTP family. Ca(2+) serves as cofactor. In terms of tissue distribution, expressed in the vascular tissues of cotyledons and rosette leaves. Accumulates in roots caps and shoot apical meristems (SAMs). Observed in flowers.

Its subcellular location is the cell membrane. The protein resides in the cytoplasm. The protein localises to the endosome membrane. Regulates flowering time under long days. May function as a signaling molecule by regulating the trafficking of other regulators. This chain is Multiple C2 domain and transmembrane region protein 6, found in Arabidopsis thaliana (Mouse-ear cress).